A 163-amino-acid polypeptide reads, in one-letter code: Phosphopantetheine adenylyltransferase (163 aa).

Thr11 lines the substrate pocket. ATP contacts are provided by residues 11–12 and His19; that span reads TF. Substrate contacts are provided by Lys43, Leu75, and Arg89. ATP is bound by residues 90–92, Glu100, and 125–131; these read GLR and YSFISST.

It belongs to the bacterial CoaD family. Homohexamer. The cofactor is Mg(2+).

It is found in the cytoplasm. It carries out the reaction (R)-4'-phosphopantetheine + ATP + H(+) = 3'-dephospho-CoA + diphosphate. Its pathway is cofactor biosynthesis; coenzyme A biosynthesis; CoA from (R)-pantothenate: step 4/5. Functionally, reversibly transfers an adenylyl group from ATP to 4'-phosphopantetheine, yielding dephospho-CoA (dPCoA) and pyrophosphate. The sequence is that of Phosphopantetheine adenylyltransferase from Acinetobacter baumannii (strain ACICU).